The primary structure comprises 206 residues: Pyridoxine/pyridoxamine 5'-phosphate oxidase (206 aa).

FMN-binding positions include 55–60 (RVVLLK), 70–71 (YT), Arg76, Lys77, and Gln99. Residue Lys60 participates in substrate binding. Residues Tyr117, Arg121, and Ser125 each coordinate substrate. Residues 134–135 (QS) and Trp179 each bind FMN. 185–187 (RLH) provides a ligand contact to substrate. Arg189 contributes to the FMN binding site.

It belongs to the pyridoxamine 5'-phosphate oxidase family. Homodimer. It depends on FMN as a cofactor.

It carries out the reaction pyridoxamine 5'-phosphate + O2 + H2O = pyridoxal 5'-phosphate + H2O2 + NH4(+). It catalyses the reaction pyridoxine 5'-phosphate + O2 = pyridoxal 5'-phosphate + H2O2. Its pathway is cofactor metabolism; pyridoxal 5'-phosphate salvage; pyridoxal 5'-phosphate from pyridoxamine 5'-phosphate: step 1/1. It functions in the pathway cofactor metabolism; pyridoxal 5'-phosphate salvage; pyridoxal 5'-phosphate from pyridoxine 5'-phosphate: step 1/1. Functionally, catalyzes the oxidation of either pyridoxine 5'-phosphate (PNP) or pyridoxamine 5'-phosphate (PMP) into pyridoxal 5'-phosphate (PLP). This chain is Pyridoxine/pyridoxamine 5'-phosphate oxidase, found in Myxococcus xanthus (strain DK1622).